Consider the following 1165-residue polypeptide: DNA-directed RNA polymerase subunit beta (1165 aa).

The protein belongs to the RNA polymerase beta chain family. The RNAP catalytic core consists of 2 alpha, 1 beta, 1 beta' and 1 omega subunit. When a sigma factor is associated with the core the holoenzyme is formed, which can initiate transcription.

The catalysed reaction is RNA(n) + a ribonucleoside 5'-triphosphate = RNA(n+1) + diphosphate. Its function is as follows. DNA-dependent RNA polymerase catalyzes the transcription of DNA into RNA using the four ribonucleoside triphosphates as substrates. The sequence is that of DNA-directed RNA polymerase subunit beta from Corynebacterium glutamicum (strain ATCC 13032 / DSM 20300 / JCM 1318 / BCRC 11384 / CCUG 27702 / LMG 3730 / NBRC 12168 / NCIMB 10025 / NRRL B-2784 / 534).